The sequence spans 1013 residues: MPPPAEVTDPSHAPAVLRQLNEQRLRGLFCDVTLIAGDTKFPAHRSVLAASSPFFREALLTSAPLPLPPATGGAAPNPATTTAASSSSSSSSSSSSSSSSASSSSSSSSSSPPPASPPASSPPRVLELPGVPAAAFSDVLNFIYSARLALPGGGGDGAAVAEIGALGRRLGISRLQGLGEGGDAWVPPTPAPMATSQPEEDSFGPGPRPAGEWEGDRAEAQAPDLQCSLPRRPLPCPQCGKSFIHPKRLQTHEAQCRRGASTRGSTGLGAGGAGPGGPAGVDASALPPPVGFRGGPEHVVKVVGGHVLYVCAACERSYVTLSSLKRHSNVHSWRRKYPCRYCEKVFALAEYRTKHEVWHTGERRYQCIFCWETFVTYYNLKTHQRAFHGISPGLLASEKTPNGGYKPKLNTLKLYRLLPMRAAKRPYKTYSQGAPEAPLSPTLNTPAPVAMPASPPPGPPPAPEPGPPPSVITFAHPAPSVIVHGGSSSGGGGSGTASTGGSQAASVITYTAPPRPPKKREYPPPPPEPAATPTSPATAVSPATAAGPAMATTTEEAKGRNPRAGRTLTYTAKPVGGIGGGGGPPTGAGRGPSQLQAPPPLCQITVRIGEEAIVKRRISETDLRPGELSGEEMEESEEDEEEEDEEEEEEDEEESKAGGEDQLWRPYYSYKPKRKAGAAGGASVGGSGLPRGRRPPRWRQKLERRSWEETPAAESPAGRARTERRHRCGDCAQTFTTLRKLRKHQEAHGGGSHSSRAGRRPSTRFTCPHCAKVCKTAAALSRHGQRHAAERPGGTPTPVIAYSKGSAGTRPGDVKEEAPQEMQVSSSSGEAGGGSTAAEEASETASLQDPIISGGEEPPVVASGGSYVYPPVQEFPLALIGGGREPGGGRGKSGSEGPVGAGEGDRMEGIGAAKVTFYPEPYPLVYGPQLLAAYPYNFSNLAALPVALNMVLPDEKGAGALPFLPGVFGYAVNPQAAPPAPPTPPPPTLPPPIPPKGEGERAGVERTQKGDVG.

Residues 30-152 (CDVTLIAGDT…IYSARLALPG (123 aa)) enclose the BTB domain. Lysine 40 participates in a covalent cross-link: Glycyl lysine isopeptide (Lys-Gly) (interchain with G-Cter in SUMO2). Low complexity predominate over residues 67 to 110 (LPPATGGAAPNPATTTAASSSSSSSSSSSSSSSSASSSSSSSSS). 2 disordered regions span residues 67–124 (LPPA…SPPR) and 183–221 (DAWV…AEAQ). The span at 111 to 121 (SPPPASPPASS) shows a compositional bias: pro residues. Residues 186 to 348 (VPPTPAPMAT…CRYCEKVFAL (163 aa)) form an interaction with CBFA2T3 region. The C2H2-type 1; atypical zinc finger occupies 234-256 (LPCPQCGKSFIHPKRLQTHEAQC). A disordered region spans residues 257–281 (RRGASTRGSTGLGAGGAGPGGPAGV). Positions 266 to 279 (TGLGAGGAGPGGPA) are enriched in gly residues. 3 consecutive C2H2-type zinc fingers follow at residues 309-331 (YVCA…SNVH), 337-359 (YPCR…EVWH), and 365-388 (YQCI…RAFH). The residue at position 391 (serine 391) is a Phosphoserine. Disordered stretches follow at residues 428–765 (KTYS…STRF), 783–852 (HGQR…DPII), 883–904 (GREP…AGEG), and 972–1013 (VNPQ…GDVG). The segment covering 453-470 (ASPPPGPPPAPEPGPPPS) has biased composition (pro residues). 2 stretches are compositionally biased toward low complexity: residues 496–506 (TASTGGSQAAS) and 531–554 (ATPT…ATTT). A Glycyl lysine isopeptide (Lys-Gly) (interchain with G-Cter in SUMO2) cross-link involves residue lysine 573. Positions 576 to 590 (GGIGGGGGPPTGAGR) are enriched in gly residues. A compositionally biased stretch (basic and acidic residues) spans 608–625 (IGEEAIVKRRISETDLRP). Residue lysine 615 forms a Glycyl lysine isopeptide (Lys-Gly) (interchain with G-Cter in SUMO2) linkage. Positions 627 to 663 (ELSGEEMEESEEDEEEEDEEEEEEDEEESKAGGEDQL) form a coiled coil. Residues 629-654 (SGEEMEESEEDEEEEDEEEEEEDEEE) show a composition bias toward acidic residues. Positions 678–689 (AAGGASVGGSGL) are enriched in gly residues. C2H2-type zinc fingers lie at residues 726-748 (HRCG…QEAH) and 765-787 (FTCP…GQRH). A phosphothreonine; by HIPK2 mark is found at threonine 795 and threonine 797. Positions 836–846 (TAAEEASETAS) are enriched in low complexity. Gly residues predominate over residues 883 to 902 (GREPGGGRGKSGSEGPVGAG). Residues 976 to 995 (AAPPAPPTPPPPTLPPPIPP) are compositionally biased toward pro residues. At threonine 983 the chain carries Phosphothreonine; by HIPK2. Residues 997–1013 (GEGERAGVERTQKGDVG) show a composition bias toward basic and acidic residues.

As to quaternary structure, interacts with HIPK2. Interacts with CBFA2T3. Interacts with ZBTB38. Phosphorylated by HIPK2. This phosphorylation reduces stability and triggers ZBTB4 protein degradation in response to DNA damage.

The protein localises to the nucleus. It localises to the chromosome. Functionally, transcriptional repressor with bimodal DNA-binding specificity. Represses transcription in a methyl-CpG-dependent manner. Binds with a higher affinity to methylated CpG dinucleotides in the consensus sequence 5'-CGCG-3' but can also bind to the non-methylated consensus sequence 5'-CTGCNA-3' also known as the consensus kaiso binding site (KBS). Can also bind specifically to a single methyl-CpG pair and can bind hemimethylated DNA but with a lower affinity compared to methylated DNA. Plays a role in postnatal myogenesis, may be involved in the regulation of satellite cells self-renewal. This chain is Zinc finger and BTB domain-containing protein 4 (ZBTB4), found in Homo sapiens (Human).